The chain runs to 66 residues: Beta-mammal toxin Co3 (66 aa).

One can recognise an LCN-type CS-alpha/beta domain in the interval 1 to 66; that stretch reads KEGYIVNYYD…VWPLPNKTCN (66 aa). Disulfide bonds link Cys-12-Cys-65, Cys-16-Cys-41, Cys-25-Cys-46, and Cys-29-Cys-48.

In terms of tissue distribution, expressed by the venom gland.

The protein resides in the secreted. Its function is as follows. Beta toxins bind voltage-independently at site-4 of sodium channels (Nav) and shift the voltage of activation toward more negative potentials thereby affecting sodium channel activation and promoting spontaneous and repetitive firing. This toxin acts on human Nav1.2/SCN2A, Nav1.4/SCN4A and Nav1.6/SCN8A voltage-gated sodium channels. Also, it reduces the peak of sodium currents in Nav1.5/SCN5A at all potentials. In vivo, is lethal to mice when intraperitoneally injected at a dose of 5ug. No activity is observed when injected into crickets or woodlice. In Centruroides ornatus (Scorpion), this protein is Beta-mammal toxin Co3.